A 356-amino-acid chain; its full sequence is Heme A synthase (356 aa).

5 consecutive transmembrane segments (helical) span residues 24 to 44 (IAIWLLICCALVFAMIVVGGV), 106 to 126 (FHRLLGRLIGLVYFIPFVYFM), 139 to 159 (LLGIFALGALQGLMGWYMVMS), 174 to 194 (AHLGLAFVIYAAMFWVATGLI), and 214 to 234 (AWMLTGLIFVMVLSGGLVAGI). Heme is bound at residue histidine 276. 3 helical membrane-spanning segments follow: residues 278–298 (LIAWLLIFSIPWFWFKAKQLS), 309–329 (LLLLMLLIQAGLGITTLLLSV), and 331–351 (LTFATAHQAGAVLLFTAALWV). Heme is bound at residue histidine 337.

The protein belongs to the COX15/CtaA family. Type 2 subfamily. Interacts with CtaB. Heme b is required as a cofactor.

Its subcellular location is the cell membrane. The enzyme catalyses Fe(II)-heme o + 2 A + H2O = Fe(II)-heme a + 2 AH2. It functions in the pathway porphyrin-containing compound metabolism; heme A biosynthesis; heme A from heme O: step 1/1. Its function is as follows. Catalyzes the conversion of heme O to heme A by two successive hydroxylations of the methyl group at C8. The first hydroxylation forms heme I, the second hydroxylation results in an unstable dihydroxymethyl group, which spontaneously dehydrates, resulting in the formyl group of heme A. This Nitrosomonas eutropha (strain DSM 101675 / C91 / Nm57) protein is Heme A synthase.